A 275-amino-acid polypeptide reads, in one-letter code: Large ribosomal subunit protein uL2 (275 aa).

Residues 223 to 275 (VAMNPVDHPHGGGEGRTGEGRVPVSPWGTPAKGYRTRNNKRTDNMIVRRRHSK) form a disordered region. Over residues 229 to 241 (DHPHGGGEGRTGE) the composition is skewed to basic and acidic residues.

It belongs to the universal ribosomal protein uL2 family. Part of the 50S ribosomal subunit. Forms a bridge to the 30S subunit in the 70S ribosome.

Functionally, one of the primary rRNA binding proteins. Required for association of the 30S and 50S subunits to form the 70S ribosome, for tRNA binding and peptide bond formation. It has been suggested to have peptidyltransferase activity; this is somewhat controversial. Makes several contacts with the 16S rRNA in the 70S ribosome. The polypeptide is Large ribosomal subunit protein uL2 (Laribacter hongkongensis (strain HLHK9)).